The chain runs to 327 residues: Microtubule-associated protein RP/EB family member 2 (327 aa).

The tract at residues 1-21 (MPGPTQTLSPNGENNNDIIQD) is disordered. P2 is subject to N-acetylalanine. S9 is modified (phosphoserine). A Calponin-homology (CH) domain is found at 57-159 (TMSRHDIIAW…FIQWFKKFYD (103 aa)). Position 167 is a phosphotyrosine (Y167). Disordered regions lie at residues 171-240 (EARQ…DKDL) and 299-327 (ASEE…QEEY). The segment at 187-327 (QIFNLPKKSH…EQQPPQQEEY (141 aa)) is DCTN1-binding. Over residues 200–234 (SPTAGAAKSSPAAKPGSTPSRPSSAKRASSSGSAS) the composition is skewed to low complexity. 2 positions are modified to phosphoserine: S219 and S236. An EB1 C-terminal domain is found at 236 to 306 (SDKDLETQVI…LYASEEHEGH (71 aa)). Positions 259-302 (EGVEKERDFYFGKLREIELLCQEHGQENDDLVQRLMDILYASEE) are APC-binding. The span at 300-317 (SEEHEGHTEEPEAEEQAH) shows a compositional bias: basic and acidic residues. Positions 318–327 (EQQPPQQEEY) are enriched in low complexity.

The protein belongs to the MAPRE family. Interacts with DCTN1. Interacts with APC (via C-terminal). Interacts with monomeric and polymerized tubulin. Interacts with SLAIN1. Interacts (via the N-terminal region) with BAG1. Interacts with ASB14. Interacts with HAX1; this interaction is essential for epidermal cell migration. In terms of processing, phosphorylated at Ser-236 by CK2 leading to enhanced cell adhesion. Phosphorylated by CDK1 and AURKB during mitosis reduces the binding affinity of MAPRE2 for microtubules. Ubiquitinated in an ASB14-dependent manner; leading to proteasomal degradation. In terms of tissue distribution, expressed in different tumor cell lines. Up-regulated in activated B- and T-lymphocytes.

The protein resides in the cytoplasm. It localises to the cytoskeleton. In terms of biological role, adapter protein that is involved in microtubule polymerization, and spindle function by stabilizing microtubules and anchoring them at centrosomes. Therefore, ensures mitotic progression and genome stability. Acts as a central regulator of microtubule reorganization in apico-basal epithelial differentiation. Plays a role during oocyte meiosis by regulating microtubule dynamics. Participates in neurite growth by interacting with plexin B3/PLXNB3 and microtubule reorganization during apico-basal epithelial differentiation. Also plays an essential role for cell migration and focal adhesion dynamics. Mechanistically, recruits HAX1 to microtubules in order to regulate focal adhesion dynamics. This is Microtubule-associated protein RP/EB family member 2 (MAPRE2) from Homo sapiens (Human).